A 333-amino-acid chain; its full sequence is Protein-methionine-sulfoxide reductase catalytic subunit MsrP (333 aa).

Positions 1–43 (MHKHRKPTEADVTPESLFYQRRRVLKALGISAAALSLPLSAQA) form a signal peptide, tat-type signal. Mo-molybdopterin-binding positions include asparagine 87, 90–91 (YE), cysteine 145, threonine 180, asparagine 232, arginine 237, and 248–250 (NIK).

Belongs to the MsrP family. In terms of assembly, heterodimer of a catalytic subunit (MsrP) and a heme-binding subunit (MsrQ). Mo-molybdopterin serves as cofactor. Predicted to be exported by the Tat system. The position of the signal peptide cleavage has not been experimentally proven.

It is found in the periplasm. It catalyses the reaction L-methionyl-[protein] + a quinone + H2O = L-methionyl-(S)-S-oxide-[protein] + a quinol. The enzyme catalyses L-methionyl-[protein] + a quinone + H2O = L-methionyl-(R)-S-oxide-[protein] + a quinol. Its function is as follows. Part of the MsrPQ system that repairs oxidized periplasmic proteins containing methionine sulfoxide residues (Met-O), using respiratory chain electrons. Thus protects these proteins from oxidative-stress damage caused by reactive species of oxygen and chlorine generated by the host defense mechanisms. MsrPQ is essential for the maintenance of envelope integrity under bleach stress, rescuing a wide series of structurally unrelated periplasmic proteins from methionine oxidation. The catalytic subunit MsrP is non-stereospecific, being able to reduce both (R-) and (S-) diastereoisomers of methionine sulfoxide. This Pectobacterium atrosepticum (strain SCRI 1043 / ATCC BAA-672) (Erwinia carotovora subsp. atroseptica) protein is Protein-methionine-sulfoxide reductase catalytic subunit MsrP.